Here is a 230-residue protein sequence, read N- to C-terminus: tRNA (guanine-N(7)-)-methyltransferase (230 aa).

The S-adenosyl-L-methionine site is built by Glu-61, Glu-86, Asp-113, and Asp-135. The active site involves Asp-135. Substrate is bound by residues Lys-139, Asp-171, and 209 to 212 (TRYE).

Belongs to the class I-like SAM-binding methyltransferase superfamily. TrmB family.

It carries out the reaction guanosine(46) in tRNA + S-adenosyl-L-methionine = N(7)-methylguanosine(46) in tRNA + S-adenosyl-L-homocysteine. Its pathway is tRNA modification; N(7)-methylguanine-tRNA biosynthesis. In terms of biological role, catalyzes the formation of N(7)-methylguanine at position 46 (m7G46) in tRNA. This Azorhizobium caulinodans (strain ATCC 43989 / DSM 5975 / JCM 20966 / LMG 6465 / NBRC 14845 / NCIMB 13405 / ORS 571) protein is tRNA (guanine-N(7)-)-methyltransferase.